Here is a 248-residue protein sequence, read N- to C-terminus: MRGLVTAVRTLTVLPVPGKEAERFSSALFWFPVVGLFLGLLQAGAGYLAMLSGWPELAASMVLIAGVLLTRGMHADGFADMADGFFGGRDRESRLRIMKDPSVGSFGAIGLILLFLFKSIVLVKLLAFGLYPWIVSGVLLARLVQVALASMLPYARREGGTAAGFVEGAGIQHFVAAFLVALFILLLLMNGEMLPSGIGLSAAIAGAVLMSLLTIKKIGGVTGDVLGASSEFTEVLVWVSGVFLALCS.

The next 6 helical transmembrane spans lie at 28–48, 103–123, 126–146, 169–189, 193–213, and 225–245; these read LFWF…AGYL, VGSF…IVLV, LAFG…LVQV, AGIQ…LLLM, MLPS…MSLL, and VLGA…VFLA.

The protein belongs to the CobS family. Requires Mg(2+) as cofactor.

It localises to the cell inner membrane. It carries out the reaction alpha-ribazole + adenosylcob(III)inamide-GDP = adenosylcob(III)alamin + GMP + H(+). It catalyses the reaction alpha-ribazole 5'-phosphate + adenosylcob(III)inamide-GDP = adenosylcob(III)alamin 5'-phosphate + GMP + H(+). Its pathway is cofactor biosynthesis; adenosylcobalamin biosynthesis; adenosylcobalamin from cob(II)yrinate a,c-diamide: step 7/7. Joins adenosylcobinamide-GDP and alpha-ribazole to generate adenosylcobalamin (Ado-cobalamin). Also synthesizes adenosylcobalamin 5'-phosphate from adenosylcobinamide-GDP and alpha-ribazole 5'-phosphate. This Chlorobium phaeobacteroides (strain BS1) protein is Adenosylcobinamide-GDP ribazoletransferase.